We begin with the raw amino-acid sequence, 227 residues long: Ribose-5-phosphate isomerase A (227 aa).

Residues 28–31 (TGST), 81–84 (DGAD), and 94–97 (KGGG) each bind substrate. E103 acts as the Proton acceptor in catalysis. K121 contributes to the substrate binding site.

This sequence belongs to the ribose 5-phosphate isomerase family. Homodimer.

The catalysed reaction is aldehydo-D-ribose 5-phosphate = D-ribulose 5-phosphate. It functions in the pathway carbohydrate degradation; pentose phosphate pathway; D-ribose 5-phosphate from D-ribulose 5-phosphate (non-oxidative stage): step 1/1. In terms of biological role, catalyzes the reversible conversion of ribose-5-phosphate to ribulose 5-phosphate. The polypeptide is Ribose-5-phosphate isomerase A (Caulobacter vibrioides (strain ATCC 19089 / CIP 103742 / CB 15) (Caulobacter crescentus)).